The sequence spans 267 residues: Glucosamine-6-phosphate deaminase (267 aa).

Aspartate 72 (proton acceptor; for enolization step) is an active-site residue. Residue aspartate 141 is the For ring-opening step of the active site. Residue histidine 143 is the Proton acceptor; for ring-opening step of the active site. Catalysis depends on glutamate 148, which acts as the For ring-opening step.

This sequence belongs to the glucosamine/galactosamine-6-phosphate isomerase family. NagB subfamily. In terms of assembly, homohexamer.

The catalysed reaction is alpha-D-glucosamine 6-phosphate + H2O = beta-D-fructose 6-phosphate + NH4(+). It participates in amino-sugar metabolism; N-acetylneuraminate degradation; D-fructose 6-phosphate from N-acetylneuraminate: step 5/5. Its activity is regulated as follows. Allosterically activated by N-acetylglucosamine 6-phosphate (GlcNAc6P). Functionally, catalyzes the reversible isomerization-deamination of glucosamine 6-phosphate (GlcN6P) to form fructose 6-phosphate (Fru6P) and ammonium ion. This Pasteurella multocida (strain Pm70) protein is Glucosamine-6-phosphate deaminase.